Consider the following 518-residue polypeptide: Probable bifunctional methylthioribulose-1-phosphate dehydratase/enolase-phosphatase E1 (518 aa).

Residues 1–247 form a methylthioribulose-1-phosphate dehydratase region; sequence MAAAPPAVAV…AIKLHQIGLD (247 aa). Residue C119 coordinates substrate. Zn(2+) contacts are provided by H137 and H139. E162 functions as the Proton donor/acceptor; for methylthioribulose-1-phosphate dehydratase activity in the catalytic mechanism. H212 is a binding site for Zn(2+). The segment at 279–518 is enolase-phosphatase E1; sequence IVLDIEGTTT…FKTITSFAEI (240 aa). Mg(2+) contacts are provided by D282 and E284. Substrate contacts are provided by residues 417 to 418 and K451; that span reads SS. D477 provides a ligand contact to Mg(2+).

This sequence in the N-terminal section; belongs to the aldolase class II family. MtnB subfamily. It in the C-terminal section; belongs to the HAD-like hydrolase superfamily. MasA/MtnC family. Zn(2+) serves as cofactor. Mg(2+) is required as a cofactor.

The enzyme catalyses 5-(methylsulfanyl)-D-ribulose 1-phosphate = 5-methylsulfanyl-2,3-dioxopentyl phosphate + H2O. It carries out the reaction 5-methylsulfanyl-2,3-dioxopentyl phosphate + H2O = 1,2-dihydroxy-5-(methylsulfanyl)pent-1-en-3-one + phosphate. It functions in the pathway amino-acid biosynthesis; L-methionine biosynthesis via salvage pathway; L-methionine from S-methyl-5-thio-alpha-D-ribose 1-phosphate: step 2/6. Its pathway is amino-acid biosynthesis; L-methionine biosynthesis via salvage pathway; L-methionine from S-methyl-5-thio-alpha-D-ribose 1-phosphate: step 3/6. It participates in amino-acid biosynthesis; L-methionine biosynthesis via salvage pathway; L-methionine from S-methyl-5-thio-alpha-D-ribose 1-phosphate: step 4/6. The polypeptide is Probable bifunctional methylthioribulose-1-phosphate dehydratase/enolase-phosphatase E1 (Populus trichocarpa (Western balsam poplar)).